The chain runs to 217 residues: Protein-L-isoaspartate O-methyltransferase (217 aa).

S62 is a catalytic residue.

The protein belongs to the methyltransferase superfamily. L-isoaspartyl/D-aspartyl protein methyltransferase family.

The protein resides in the cytoplasm. The catalysed reaction is [protein]-L-isoaspartate + S-adenosyl-L-methionine = [protein]-L-isoaspartate alpha-methyl ester + S-adenosyl-L-homocysteine. Catalyzes the methyl esterification of L-isoaspartyl residues in peptides and proteins that result from spontaneous decomposition of normal L-aspartyl and L-asparaginyl residues. It plays a role in the repair and/or degradation of damaged proteins. The polypeptide is Protein-L-isoaspartate O-methyltransferase (Trichlorobacter lovleyi (strain ATCC BAA-1151 / DSM 17278 / SZ) (Geobacter lovleyi)).